The primary structure comprises 240 residues: Putative peptidoglycan hydrolase Rv2525c (240 aa).

The tat-type signal signal peptide spans 1–33 (MSVSRRDVLKFAAATPGVLGLGVVASSLRAAPA).

Post-translationally, predicted to be exported by the Tat system. The position of the signal peptide cleavage has not been experimentally proven.

It is found in the secreted. It carries out the reaction Hydrolysis of (1-&gt;4)-beta-linkages between N-acetylmuramic acid and N-acetyl-D-glucosamine residues in a peptidoglycan and between N-acetyl-D-glucosamine residues in chitodextrins.. It functions in the pathway cell wall degradation; peptidoglycan degradation. May function as a peptidoglycan hydrolase with glycosidase activity. In vitro, displays esterase activity toward p-nitrophenyl esters of various acyl chain length (C4 to C16), with a preference for p-nitrophenyl butyrate (C4). This Mycobacterium tuberculosis (strain ATCC 25618 / H37Rv) protein is Putative peptidoglycan hydrolase Rv2525c.